The following is an 87-amino-acid chain: Small ribosomal subunit protein uS17 (87 aa).

Belongs to the universal ribosomal protein uS17 family. Part of the 30S ribosomal subunit.

Its function is as follows. One of the primary rRNA binding proteins, it binds specifically to the 5'-end of 16S ribosomal RNA. The protein is Small ribosomal subunit protein uS17 of Anoxybacillus flavithermus (strain DSM 21510 / WK1).